A 172-amino-acid polypeptide reads, in one-letter code: MIDRDGYRPNVGIILCNARNQVFWGKRIREHSWQFPQGGIKYGESPEQAMYRELMEEVGLRPEHVKILGRTRDWLRYDVPTNWIKREWRGSYRGQKQIWFLLRLIGRDSDVSLRASTHPEFDAWRWSDYWVAMDSVIEFKRDVYRMALKELSMHLTEHRRPRVAERVDQLVR.

Residues 6 to 149 (GYRPNVGIIL…KRDVYRMALK (144 aa)) enclose the Nudix hydrolase domain. Positions 38–59 (GGIKYGESPEQAMYRELMEEVG) match the Nudix box motif.

The protein belongs to the Nudix hydrolase family. RppH subfamily. A divalent metal cation serves as cofactor.

In terms of biological role, accelerates the degradation of transcripts by removing pyrophosphate from the 5'-end of triphosphorylated RNA, leading to a more labile monophosphorylated state that can stimulate subsequent ribonuclease cleavage. The chain is RNA pyrophosphohydrolase from Methylobacillus flagellatus (strain ATCC 51484 / DSM 6875 / VKM B-1610 / KT).